We begin with the raw amino-acid sequence, 260 residues long: Indole-3-glycerol phosphate synthase (260 aa).

The protein belongs to the TrpC family.

It catalyses the reaction 1-(2-carboxyphenylamino)-1-deoxy-D-ribulose 5-phosphate + H(+) = (1S,2R)-1-C-(indol-3-yl)glycerol 3-phosphate + CO2 + H2O. Its pathway is amino-acid biosynthesis; L-tryptophan biosynthesis; L-tryptophan from chorismate: step 4/5. The polypeptide is Indole-3-glycerol phosphate synthase (Neisseria meningitidis serogroup C / serotype 2a (strain ATCC 700532 / DSM 15464 / FAM18)).